The chain runs to 324 residues: Beta-ketoacyl-[acyl-carrier-protein] synthase III (324 aa).

Catalysis depends on residues C112 and H251. Residues 252-256 (QANIR) are ACP-binding. N281 is a catalytic residue.

This sequence belongs to the thiolase-like superfamily. FabH family. As to quaternary structure, homodimer.

The protein resides in the cytoplasm. It carries out the reaction malonyl-[ACP] + acetyl-CoA + H(+) = 3-oxobutanoyl-[ACP] + CO2 + CoA. It participates in lipid metabolism; fatty acid biosynthesis. Functionally, catalyzes the condensation reaction of fatty acid synthesis by the addition to an acyl acceptor of two carbons from malonyl-ACP. Catalyzes the first condensation reaction which initiates fatty acid synthesis and may therefore play a role in governing the total rate of fatty acid production. Possesses both acetoacetyl-ACP synthase and acetyl transacylase activities. Its substrate specificity determines the biosynthesis of branched-chain and/or straight-chain of fatty acids. This Desulfotalea psychrophila (strain LSv54 / DSM 12343) protein is Beta-ketoacyl-[acyl-carrier-protein] synthase III.